The primary structure comprises 96 residues: Acylphosphatase (96 aa).

The 88-residue stretch at 4–91 (RVHVYVKGKV…GEFDDFRILY (88 aa)) folds into the Acylphosphatase-like domain. Active-site residues include arginine 19 and asparagine 37.

It belongs to the acylphosphatase family.

It catalyses the reaction an acyl phosphate + H2O = a carboxylate + phosphate + H(+). This chain is Acylphosphatase (acyP), found in Syntrophus aciditrophicus (strain SB).